Consider the following 593-residue polypeptide: ATPase family AAA domain-containing protein 3-B (593 aa).

Disordered regions lie at residues 1–64 (MSWL…LDQS), 109–129 (EEKR…AQYQ), and 145–164 (QLQN…KQEA). The Mitochondrial intermembrane portion of the chain corresponds to 1-242 (MSWLFGLNRG…FRTFISDWDK (242 aa)). Residues 12 to 27 (PEPPGVPGFPEPPSPP) are compositionally biased toward pro residues. Composition is skewed to basic and acidic residues over residues 33–44 (GGDKNRPKDKWS), 53–64 (RAAKAARELDQS), 109–121 (EEKR…ETKQ), and 150–164 (ENLR…KQEA). Positions 51-215 (LERAAKAARE…QIRLKAAEHR (165 aa)) form a coiled coil. A helical membrane pass occupies residues 243–260 (VTATVAGLTLLAVGVYTA). The Mitochondrial matrix segment spans residues 261-593 (KNGTGVAGRY…LQPLLEGTPV (333 aa)). Residue 348–355 (GPPGTGKT) participates in ATP binding. The segment covering 570–580 (AEGKESTKEIG) has biased composition (basic and acidic residues). The interval 570-593 (AEGKESTKEIGKNPLQPLLEGTPV) is disordered.

The protein belongs to the AAA ATPase family. As to quaternary structure, can form homooligomers. Homodimer formation at the N-terminus may be regulated by ATP and is required for the interaction with the inner surface of the mitochondrial outer membrane and correct mitochondrial homeostasis.

It is found in the mitochondrion inner membrane. Its subcellular location is the mitochondrion matrix. The protein localises to the mitochondrion nucleoid. It catalyses the reaction ATP + H2O = ADP + phosphate + H(+). Essential for mitochondrial network organization, mitochondrial metabolism and cell growth at organism and cellular level. May play an important role in mitochondrial protein synthesis. May also participate in mitochondrial DNA replication. May bind to mitochondrial DNA D-loops and contribute to nucleoid stability. Required for enhanced channeling of cholesterol for hormone-dependent steroidogenesis. Involved in mitochondrial-mediated antiviral innate immunity. Required to protect mitochondria from the PERK-mediated unfolded protein response: specifically inhibits the activity of EIF2AK3/PERK at mitochondria-endoplasmic reticulum contact sites, thereby providing a safe haven for mitochondrial protein translation during endoplasmic reticulum stress. Ability to inhibit EIF2AK3/PERK is independent of its ATPase activity. Also involved in the mitochondrial DNA damage response by promoting signaling between damaged genomes and the mitochondrial membrane, leading to activation of the integrated stress response (ISR). In Xenopus laevis (African clawed frog), this protein is ATPase family AAA domain-containing protein 3-B (atad3-b).